A 283-amino-acid chain; its full sequence is Bifunctional protein FolD (283 aa).

An NADP(+)-binding site is contributed by 166-168 (GAS).

The protein belongs to the tetrahydrofolate dehydrogenase/cyclohydrolase family. Homodimer.

It carries out the reaction (6R)-5,10-methylene-5,6,7,8-tetrahydrofolate + NADP(+) = (6R)-5,10-methenyltetrahydrofolate + NADPH. The catalysed reaction is (6R)-5,10-methenyltetrahydrofolate + H2O = (6R)-10-formyltetrahydrofolate + H(+). It functions in the pathway one-carbon metabolism; tetrahydrofolate interconversion. Functionally, catalyzes the oxidation of 5,10-methylenetetrahydrofolate to 5,10-methenyltetrahydrofolate and then the hydrolysis of 5,10-methenyltetrahydrofolate to 10-formyltetrahydrofolate. The sequence is that of Bifunctional protein FolD from Coxiella burnetii (strain CbuK_Q154) (Coxiella burnetii (strain Q154)).